The sequence spans 741 residues: Ribosome-releasing factor 2, mitochondrial (741 aa).

A mitochondrion-targeting transit peptide spans 1 to 29; that stretch reads MLKYEFLHGLQKRSHYLRQLSGQFFSRSY. The tr-type G domain occupies 31 to 310; sequence SKIRNIGILA…AVNSYLPAPE (280 aa). GTP contacts are provided by residues 40-47, 104-108, and 158-161; these read AHIDAGKT, DTPGH, and NKMD.

The protein belongs to the TRAFAC class translation factor GTPase superfamily. Classic translation factor GTPase family. EF-G/EF-2 subfamily.

The protein resides in the mitochondrion. Its function is as follows. Mitochondrial GTPase that mediates the disassembly of ribosomes from messenger RNA at the termination of mitochondrial protein biosynthesis. Not involved in the GTP-dependent ribosomal translocation step during translation elongation. The polypeptide is Ribosome-releasing factor 2, mitochondrial (Drosophila ananassae (Fruit fly)).